Here is a 159-residue protein sequence, read N- to C-terminus: Putative pre-16S rRNA nuclease (159 aa).

It belongs to the YqgF nuclease family.

It localises to the cytoplasm. Functionally, could be a nuclease involved in processing of the 5'-end of pre-16S rRNA. The sequence is that of Putative pre-16S rRNA nuclease from Synechococcus sp. (strain JA-3-3Ab) (Cyanobacteria bacterium Yellowstone A-Prime).